A 396-amino-acid chain; its full sequence is Chorismate synthase (396 aa).

NADP(+)-binding residues include R41 and R47. Residues 130-132, G298, 313-317, and R339 each bind FMN; these read RAS and KPIPT.

Belongs to the chorismate synthase family. As to quaternary structure, homotetramer. Requires FMNH2 as cofactor.

The catalysed reaction is 5-O-(1-carboxyvinyl)-3-phosphoshikimate = chorismate + phosphate. It functions in the pathway metabolic intermediate biosynthesis; chorismate biosynthesis; chorismate from D-erythrose 4-phosphate and phosphoenolpyruvate: step 7/7. In terms of biological role, catalyzes the anti-1,4-elimination of the C-3 phosphate and the C-6 proR hydrogen from 5-enolpyruvylshikimate-3-phosphate (EPSP) to yield chorismate, which is the branch point compound that serves as the starting substrate for the three terminal pathways of aromatic amino acid biosynthesis. This reaction introduces a second double bond into the aromatic ring system. The protein is Chorismate synthase of Syntrophomonas wolfei subsp. wolfei (strain DSM 2245B / Goettingen).